A 1354-amino-acid polypeptide reads, in one-letter code: Phosphoribosylformylglycinamidine synthase (1354 aa).

Residues G327–D338, S407–F409, and A714 contribute to the ATP site. D715, E754, N758, and D918 together coordinate Mg(2+). Position 920 (S920) interacts with ATP. The Glutamine amidotransferase type-1 domain occupies V1087–P1337. Catalysis depends on C1180, which acts as the Nucleophile. Residues H1310 and E1312 contribute to the active site.

The protein in the N-terminal section; belongs to the FGAMS family.

It catalyses the reaction N(2)-formyl-N(1)-(5-phospho-beta-D-ribosyl)glycinamide + L-glutamine + ATP + H2O = 2-formamido-N(1)-(5-O-phospho-beta-D-ribosyl)acetamidine + L-glutamate + ADP + phosphate + H(+). It participates in purine metabolism; IMP biosynthesis via de novo pathway; 5-amino-1-(5-phospho-D-ribosyl)imidazole from N(2)-formyl-N(1)-(5-phospho-D-ribosyl)glycinamide: step 1/2. Functionally, phosphoribosylformylglycinamidine synthase involved in the purines biosynthetic pathway. Catalyzes the ATP-dependent conversion of formylglycinamide ribonucleotide (FGAR) and glutamine to yield formylglycinamidine ribonucleotide (FGAM) and glutamate. Because of its role in metabolisms, is involved in sleep regulation. This Drosophila melanogaster (Fruit fly) protein is Phosphoribosylformylglycinamidine synthase.